A 440-amino-acid chain; its full sequence is Chromosome partition protein MukF (440 aa).

The tract at residues Leu208–Ile236 is leucine-zipper.

It belongs to the MukF family. In terms of assembly, interacts, and probably forms a ternary complex, with MukE and MukB via its C-terminal region. The complex formation is stimulated by calcium or magnesium. It is required for an interaction between MukE and MukB.

It is found in the cytoplasm. It localises to the nucleoid. Functionally, involved in chromosome condensation, segregation and cell cycle progression. May participate in facilitating chromosome segregation by condensation DNA from both sides of a centrally located replisome during cell division. Not required for mini-F plasmid partitioning. Probably acts via its interaction with MukB and MukE. Overexpression results in anucleate cells. It has a calcium binding activity. This chain is Chromosome partition protein MukF, found in Klebsiella pneumoniae (strain 342).